We begin with the raw amino-acid sequence, 278 residues long: MEMLEEHRCFEGWQQRWRHDSSTLNCPMTFSIFLPPPRDHTPPPVLYWLSGLTCNDENFTTKAGAQRVAAELGIVLVMPDTSPRGEKVANDDGYDLGQGAGFYLNATQPPWATHYRMYDYLRDELPALVQSQFNVSDRCAISGHSMGGHGALIMALKNPGKYTSVSAFAPIVNPCSVPWGIKAFSTYLGEDKNAWLEWDSCALMYASNAQDAIPTLIDQGDNDQFLADQLQPAVLAEAARQKAWPMTLRIQPGYDHSYYFIASFIEDHLRFHAQYLLK.

Residues Ser145, Asp223, and His256 each act as charge relay system in the active site.

Belongs to the esterase D family.

The catalysed reaction is S-formylglutathione + H2O = formate + glutathione + H(+). Functionally, serine hydrolase involved in the detoxification of formaldehyde. Hydrolyzes S-formylglutathione to glutathione and formate. The chain is S-formylglutathione hydrolase YeiG (yeiG) from Shigella flexneri serotype 5b (strain 8401).